Here is a 91-residue protein sequence, read N- to C-terminus: UPF0250 protein PSEEN4821 (91 aa).

This sequence belongs to the UPF0250 family.

The protein is UPF0250 protein PSEEN4821 of Pseudomonas entomophila (strain L48).